The primary structure comprises 149 residues: 3-dehydroquinate dehydratase (149 aa).

Catalysis depends on Tyr26, which acts as the Proton acceptor. Residues Asn77, His83, and Asp90 each contribute to the substrate site. His103 serves as the catalytic Proton donor. Substrate contacts are provided by residues 104-105 (LS) and Arg114.

This sequence belongs to the type-II 3-dehydroquinase family. Homododecamer.

The catalysed reaction is 3-dehydroquinate = 3-dehydroshikimate + H2O. The protein operates within metabolic intermediate biosynthesis; chorismate biosynthesis; chorismate from D-erythrose 4-phosphate and phosphoenolpyruvate: step 3/7. Catalyzes a trans-dehydration via an enolate intermediate. This chain is 3-dehydroquinate dehydratase, found in Aliivibrio fischeri (strain MJ11) (Vibrio fischeri).